The sequence spans 289 residues: Acetylglutamate kinase (289 aa).

Residues 60–61, Arg-82, and Asn-186 each bind substrate; that span reads GG.

The protein belongs to the acetylglutamate kinase family. ArgB subfamily.

The protein resides in the cytoplasm. The enzyme catalyses N-acetyl-L-glutamate + ATP = N-acetyl-L-glutamyl 5-phosphate + ADP. It participates in amino-acid biosynthesis; L-arginine biosynthesis; N(2)-acetyl-L-ornithine from L-glutamate: step 2/4. Functionally, catalyzes the ATP-dependent phosphorylation of N-acetyl-L-glutamate. The chain is Acetylglutamate kinase from Methanoculleus marisnigri (strain ATCC 35101 / DSM 1498 / JR1).